A 286-amino-acid polypeptide reads, in one-letter code: D-tagatose-1,6-bisphosphate aldolase subunit KbaY (286 aa).

Catalysis depends on Asp-82, which acts as the Proton donor. 2 residues coordinate Zn(2+): His-83 and His-180. Gly-181 lines the dihydroxyacetone phosphate pocket. His-208 is a Zn(2+) binding site. Dihydroxyacetone phosphate-binding positions include 209–211 (GAS) and 230–233 (NVAT).

Belongs to the class II fructose-bisphosphate aldolase family. TagBP aldolase KbaY subfamily. As to quaternary structure, homotetramer. Forms a complex with KbaZ. The cofactor is Zn(2+).

The catalysed reaction is D-tagatofuranose 1,6-bisphosphate = D-glyceraldehyde 3-phosphate + dihydroxyacetone phosphate. Its pathway is carbohydrate metabolism; D-tagatose 6-phosphate degradation; D-glyceraldehyde 3-phosphate and glycerone phosphate from D-tagatose 6-phosphate: step 2/2. Functionally, catalytic subunit of the tagatose-1,6-bisphosphate aldolase KbaYZ, which catalyzes the reversible aldol condensation of dihydroxyacetone phosphate (DHAP or glycerone-phosphate) with glyceraldehyde 3-phosphate (G3P) to produce tagatose 1,6-bisphosphate (TBP). Requires KbaZ subunit for full activity and stability. This Escherichia coli O17:K52:H18 (strain UMN026 / ExPEC) protein is D-tagatose-1,6-bisphosphate aldolase subunit KbaY.